The primary structure comprises 465 residues: CCA-adding enzyme (465 aa).

2 residues coordinate ATP: Ser-63 and Lys-66. CTP contacts are provided by Ser-63 and Lys-66. Residues Glu-75, Asp-77, and Asp-127 each contribute to the Mg(2+) site. Residues His-149, Lys-171, and Tyr-180 each coordinate ATP. 3 residues coordinate CTP: His-149, Lys-171, and Tyr-180.

The protein belongs to the tRNA nucleotidyltransferase/poly(A) polymerase family. Archaeal CCA-adding enzyme subfamily. In terms of assembly, homodimer. It depends on Mg(2+) as a cofactor.

The enzyme catalyses a tRNA precursor + 2 CTP + ATP = a tRNA with a 3' CCA end + 3 diphosphate. It carries out the reaction a tRNA with a 3' CCA end + 2 CTP + ATP = a tRNA with a 3' CCACCA end + 3 diphosphate. Catalyzes the addition and repair of the essential 3'-terminal CCA sequence in tRNAs without using a nucleic acid template. Adds these three nucleotides in the order of C, C, and A to the tRNA nucleotide-73, using CTP and ATP as substrates and producing inorganic pyrophosphate. tRNA 3'-terminal CCA addition is required both for tRNA processing and repair. Also involved in tRNA surveillance by mediating tandem CCA addition to generate a CCACCA at the 3' terminus of unstable tRNAs. While stable tRNAs receive only 3'-terminal CCA, unstable tRNAs are marked with CCACCA and rapidly degraded. This is CCA-adding enzyme from Aeropyrum pernix (strain ATCC 700893 / DSM 11879 / JCM 9820 / NBRC 100138 / K1).